Consider the following 547-residue polypeptide: Inositol 1,4,5-trisphosphate receptor-interacting protein (547 aa).

Positions 1–15 (MAMGLFRVCLVVVTA) are cleaved as a signal peptide. Residues 16 to 83 (IINHPLLFPR…EEGRQQNETR (68 aa)) are Extracellular-facing. Residues Asn-27 and Asn-80 are each glycosylated (N-linked (GlcNAc...) asparagine). The stretch at 32–82 (ENEEEIIRKMQAHQEKLQLEQLRLEEEVARLAAEKEALEQVAEEGRQQNET) forms a coiled coil. A helical transmembrane segment spans residues 84–100 (VAWDLWSTLCMILFLMI). The Cytoplasmic segment spans residues 101–547 (EVWRQDHQEG…VPSDQPTPKS (447 aa)). Residues 109–129 (EGPSPECLGGEEDELPGLGGA) form a disordered region. Ser-547 is modified (phosphoserine).

This sequence belongs to the ITPRIP family. Interacts with ITPR. As to expression, detected in brain where it is concentrated in cerebellar Purkinje cells (at protein level).

It is found in the cell membrane. Its subcellular location is the nucleus outer membrane. Functionally, enhances Ca(2+)-mediated inhibition of inositol 1,4,5-triphosphate receptor (ITPR) Ca(2+) release. The protein is Inositol 1,4,5-trisphosphate receptor-interacting protein (ITPRIP) of Homo sapiens (Human).